We begin with the raw amino-acid sequence, 339 residues long: Leucine-rich repeat-containing protein 75A (339 aa).

Residues 1–25 (MGTRQTKGSLAERASPGAAPGPRRE) are disordered. Residues 11 to 21 (AERASPGAAPG) show a composition bias toward low complexity. LRR repeat units lie at residues 203 to 216 (VDSVELGFTGLTDD) and 228 to 241 (LPRLTTLALNGNRL). The tract at residues 294–339 (LPTILELGEGPGTGEEAREGTDQQDPIGSPVTPARGQESTECVIQT) is disordered. Residue Ser322 is modified to Phosphoserine. Position 325 is a phosphothreonine (Thr325). Polar residues predominate over residues 330–339 (QESTECVIQT).

The protein belongs to the LRRC75 family.

This chain is Leucine-rich repeat-containing protein 75A (Lrrc75a), found in Mus musculus (Mouse).